The following is a 434-amino-acid chain: Serine--tRNA ligase (434 aa).

Residue 230-232 participates in L-serine binding; it reads TSE. ATP contacts are provided by residues 261–263 and valine 277; that span reads RRE. Glutamate 284 is a binding site for L-serine. 348–351 lines the ATP pocket; the sequence is ELTS. An L-serine-binding site is contributed by threonine 393.

Belongs to the class-II aminoacyl-tRNA synthetase family. Type-1 seryl-tRNA synthetase subfamily. Homodimer. The tRNA molecule binds across the dimer.

It is found in the cytoplasm. The catalysed reaction is tRNA(Ser) + L-serine + ATP = L-seryl-tRNA(Ser) + AMP + diphosphate + H(+). It carries out the reaction tRNA(Sec) + L-serine + ATP = L-seryl-tRNA(Sec) + AMP + diphosphate + H(+). Its pathway is aminoacyl-tRNA biosynthesis; selenocysteinyl-tRNA(Sec) biosynthesis; L-seryl-tRNA(Sec) from L-serine and tRNA(Sec): step 1/1. Its function is as follows. Catalyzes the attachment of serine to tRNA(Ser). Is also able to aminoacylate tRNA(Sec) with serine, to form the misacylated tRNA L-seryl-tRNA(Sec), which will be further converted into selenocysteinyl-tRNA(Sec). This Kocuria rhizophila (strain ATCC 9341 / DSM 348 / NBRC 103217 / DC2201) protein is Serine--tRNA ligase.